We begin with the raw amino-acid sequence, 498 residues long: Sugar transport protein 2 (498 aa).

Residues 1 to 22 are Cytoplasmic-facing; that stretch reads MAVGSMNVEEGTKAFPAKLTGQ. The next 12 helical transmembrane spans lie at 23–43, 80–100, 117–137, 140–160, 167–187, 200–220, 288–308, 320–340, 348–368, 381–401, 421–441, and 450–470; these read VFLC…DIGI, LLQL…FISS, IFFL…MLIG, ILLG…ISEI, GGLN…ASYV, YSLG…FFIH, LQFF…PVLF, ISTV…LLVV, LLME…GILL, AVPL…AWSW, GYFC…QFFL, and LLFF…VFFL. Residues 471–498 lie on the Cytoplasmic side of the membrane; it reads PETKGVPIEEMAEKRWKTHPRWKKYFKD.

The protein belongs to the major facilitator superfamily. Sugar transporter (TC 2.A.1.1) family. As to expression, pollen specific (at protein level).

It localises to the membrane. In terms of biological role, mediates an active uptake of hexoses, probably by sugar/hydrogen symport. Can transport glucose, 3-O-methylglucose, xylose, mannose, fructose and galactose. The sequence is that of Sugar transport protein 2 (STP2) from Arabidopsis thaliana (Mouse-ear cress).